Consider the following 501-residue polypeptide: ADP,ATP carrier protein 3 (501 aa).

Transmembrane regions (helical) follow at residues 23–43, 59–79, 90–110, 146–166, 183–203, 227–247, 293–313, 326–346, 361–381, 383–403, 446–466, and 470–490; these read LKLFIPMALMMLCILFNFGAL, IISFLKLWLVLPSCVIFTILY, YIFYSIVGTFLLFFLLFAYII, YALMYIFSELWSAVVINLMFW, PVLGMVGNIGLIIAGSVLVFF, IMLQPIISIIVTAGIIAMFLF, IALLIICYGLLINIVEGPWKA, VNFMGMFNIWMGISCVTFMII, LLTPIMLSITGFMFFIFIIFI, EIGTCFGDFNLLYVAIIVGAI, FGKSLGAFIQSLIFIIIPTAT, and IIIYLLVIFIVMMNLWIWNII.

It belongs to the ADP/ATP translocase tlc family.

It localises to the cell membrane. In terms of biological role, provides the rickettsial cell with host ATP in exchange for rickettsial ADP. This is an obligate exchange system. This energy acquiring activity is an important component of rickettsial parasitism. The polypeptide is ADP,ATP carrier protein 3 (tlcC) (Rickettsia prowazekii (strain Madrid E)).